We begin with the raw amino-acid sequence, 708 residues long: Glycine--tRNA ligase beta subunit (708 aa).

This sequence belongs to the class-II aminoacyl-tRNA synthetase family. In terms of assembly, tetramer of two alpha and two beta subunits.

It localises to the cytoplasm. It carries out the reaction tRNA(Gly) + glycine + ATP = glycyl-tRNA(Gly) + AMP + diphosphate. In Methylobacillus flagellatus (strain ATCC 51484 / DSM 6875 / VKM B-1610 / KT), this protein is Glycine--tRNA ligase beta subunit.